Here is a 338-residue protein sequence, read N- to C-terminus: Lipoate-protein ligase A (338 aa).

In terms of domain architecture, BPL/LPL catalytic spans 29-216 (PATQRVLFLW…AFFAHYGERI (188 aa)). Residues Arg-71, 76–79 (GAVF), and Lys-134 each bind ATP. Residue Lys-134 coordinates (R)-lipoate.

Belongs to the LplA family. As to quaternary structure, monomer.

It localises to the cytoplasm. It catalyses the reaction L-lysyl-[lipoyl-carrier protein] + (R)-lipoate + ATP = N(6)-[(R)-lipoyl]-L-lysyl-[lipoyl-carrier protein] + AMP + diphosphate + H(+). It participates in protein modification; protein lipoylation via exogenous pathway; protein N(6)-(lipoyl)lysine from lipoate: step 1/2. The protein operates within protein modification; protein lipoylation via exogenous pathway; protein N(6)-(lipoyl)lysine from lipoate: step 2/2. Its function is as follows. Catalyzes both the ATP-dependent activation of exogenously supplied lipoate to lipoyl-AMP and the transfer of the activated lipoyl onto the lipoyl domains of lipoate-dependent enzymes. This is Lipoate-protein ligase A from Salmonella typhi.